The sequence spans 248 residues: Probable transcriptional regulatory protein Plav_2114 (248 aa).

Belongs to the TACO1 family.

It localises to the cytoplasm. The protein is Probable transcriptional regulatory protein Plav_2114 of Parvibaculum lavamentivorans (strain DS-1 / DSM 13023 / NCIMB 13966).